We begin with the raw amino-acid sequence, 95 residues long: MAFKFNAEVRTAQGKGASRRLRNNGQIPAIVYGGSEEPVSIILNHDELNNAQAHESFYSEVITLVIGGKEVAVKVQAMQRHPFKPKLVHIDFKRA.

Belongs to the bacterial ribosomal protein bL25 family. In terms of assembly, part of the 50S ribosomal subunit; part of the 5S rRNA/L5/L18/L25 subcomplex. Contacts the 5S rRNA. Binds to the 5S rRNA independently of L5 and L18.

In terms of biological role, this is one of the proteins that binds to the 5S RNA in the ribosome where it forms part of the central protuberance. The chain is Large ribosomal subunit protein bL25 from Haemophilus influenzae (strain 86-028NP).